Here is a 499-residue protein sequence, read N- to C-terminus: Maturase K (499 aa).

Belongs to the intron maturase 2 family. MatK subfamily.

The protein resides in the plastid. Its subcellular location is the chloroplast. In terms of biological role, usually encoded in the trnK tRNA gene intron. Probably assists in splicing its own and other chloroplast group II introns. This is Maturase K from Ceratozamia mexicana (Mexican horncone).